The following is a 154-amino-acid chain: SsrA-binding protein (154 aa).

The protein belongs to the SmpB family.

The protein resides in the cytoplasm. In terms of biological role, required for rescue of stalled ribosomes mediated by trans-translation. Binds to transfer-messenger RNA (tmRNA), required for stable association of tmRNA with ribosomes. tmRNA and SmpB together mimic tRNA shape, replacing the anticodon stem-loop with SmpB. tmRNA is encoded by the ssrA gene; the 2 termini fold to resemble tRNA(Ala) and it encodes a 'tag peptide', a short internal open reading frame. During trans-translation Ala-aminoacylated tmRNA acts like a tRNA, entering the A-site of stalled ribosomes, displacing the stalled mRNA. The ribosome then switches to translate the ORF on the tmRNA; the nascent peptide is terminated with the 'tag peptide' encoded by the tmRNA and targeted for degradation. The ribosome is freed to recommence translation, which seems to be the essential function of trans-translation. This Staphylococcus aureus (strain USA300) protein is SsrA-binding protein.